Reading from the N-terminus, the 170-residue chain is Universal stress protein MJ0531 (170 aa).

Belongs to the universal stress protein A family.

This is Universal stress protein MJ0531 from Methanocaldococcus jannaschii (strain ATCC 43067 / DSM 2661 / JAL-1 / JCM 10045 / NBRC 100440) (Methanococcus jannaschii).